The following is a 452-amino-acid chain: Bifunctional protein GlmU (452 aa).

The segment at 1-226 (MNFSAVILAA…PIEVEGVNDR (226 aa)) is pyrophosphorylase. UDP-N-acetyl-alpha-D-glucosamine is bound by residues 8–11 (LAAG), lysine 22, glutamine 73, 78–79 (GT), 100–102 (YGD), glycine 137, glutamate 151, asparagine 166, and asparagine 224. A Mg(2+)-binding site is contributed by aspartate 102. Asparagine 224 lines the Mg(2+) pocket. The tract at residues 227-247 (AQLARLERAYQAAQAQKLLEQ) is linker. Positions 248-452 (GVMLRDPSRF…IANWQRPTKK (205 aa)) are N-acetyltransferase. UDP-N-acetyl-alpha-D-glucosamine contacts are provided by arginine 330 and lysine 348. Catalysis depends on histidine 360, which acts as the Proton acceptor. The UDP-N-acetyl-alpha-D-glucosamine site is built by tyrosine 363 and asparagine 374. Residues alanine 377, 383 to 384 (NY), serine 402, alanine 420, and arginine 437 contribute to the acetyl-CoA site.

The protein in the N-terminal section; belongs to the N-acetylglucosamine-1-phosphate uridyltransferase family. It in the C-terminal section; belongs to the transferase hexapeptide repeat family. In terms of assembly, homotrimer. Mg(2+) is required as a cofactor.

The protein localises to the cytoplasm. It carries out the reaction alpha-D-glucosamine 1-phosphate + acetyl-CoA = N-acetyl-alpha-D-glucosamine 1-phosphate + CoA + H(+). The enzyme catalyses N-acetyl-alpha-D-glucosamine 1-phosphate + UTP + H(+) = UDP-N-acetyl-alpha-D-glucosamine + diphosphate. It participates in nucleotide-sugar biosynthesis; UDP-N-acetyl-alpha-D-glucosamine biosynthesis; N-acetyl-alpha-D-glucosamine 1-phosphate from alpha-D-glucosamine 6-phosphate (route II): step 2/2. The protein operates within nucleotide-sugar biosynthesis; UDP-N-acetyl-alpha-D-glucosamine biosynthesis; UDP-N-acetyl-alpha-D-glucosamine from N-acetyl-alpha-D-glucosamine 1-phosphate: step 1/1. It functions in the pathway bacterial outer membrane biogenesis; LPS lipid A biosynthesis. Catalyzes the last two sequential reactions in the de novo biosynthetic pathway for UDP-N-acetylglucosamine (UDP-GlcNAc). The C-terminal domain catalyzes the transfer of acetyl group from acetyl coenzyme A to glucosamine-1-phosphate (GlcN-1-P) to produce N-acetylglucosamine-1-phosphate (GlcNAc-1-P), which is converted into UDP-GlcNAc by the transfer of uridine 5-monophosphate (from uridine 5-triphosphate), a reaction catalyzed by the N-terminal domain. In Aliivibrio fischeri (strain MJ11) (Vibrio fischeri), this protein is Bifunctional protein GlmU.